The following is a 239-amino-acid chain: Probable phosphatase Csac_1188 (239 aa).

Residues His8, His10, His16, His41, Glu74, His102, His132, Asp192, and His194 each contribute to the Zn(2+) site.

This sequence belongs to the PHP family. Requires Zn(2+) as cofactor.

The chain is Probable phosphatase Csac_1188 from Caldicellulosiruptor saccharolyticus (strain ATCC 43494 / DSM 8903 / Tp8T 6331).